The chain runs to 37 residues: Large ribosomal subunit protein bL36c (37 aa).

As to quaternary structure, component of the chloroplast large ribosomal subunit (LSU). Mature 70S chloroplast ribosomes of higher plants consist of a small (30S) and a large (50S) subunit. The 30S small subunit contains 1 molecule of ribosomal RNA (16S rRNA) and 24 different proteins. The 50S large subunit contains 3 rRNA molecules (23S, 5S and 4.5S rRNA) and 33 different proteins.

It localises to the plastid. The protein localises to the chloroplast. In terms of biological role, component of the chloroplast ribosome (chloro-ribosome), a dedicated translation machinery responsible for the synthesis of chloroplast genome-encoded proteins, including proteins of the transcription and translation machinery and components of the photosynthetic apparatus. This is Large ribosomal subunit protein bL36c (rpl36) from Spinacia oleracea (Spinach).